Reading from the N-terminus, the 386-residue chain is Bifunctional enzyme IspD/IspF (386 aa).

Residues 1–230 form a 2-C-methyl-D-erythritol 4-phosphate cytidylyltransferase region; that stretch reads MIRDERVAAI…RARSILEAPV (230 aa). The segment at 231–386 is 2-C-methyl-D-erythritol 2,4-cyclodiphosphate synthase; that stretch reads AMGVGYDTHR…HAVALLVRVR (156 aa). 2 residues coordinate a divalent metal cation: D237 and H239. 4-CDP-2-C-methyl-D-erythritol 2-phosphate-binding positions include 237-239 and 262-263; these read DTH and HS. H270 serves as a coordination point for a divalent metal cation. 4-CDP-2-C-methyl-D-erythritol 2-phosphate contacts are provided by residues 284 to 286, 289 to 293, 360 to 363, F367, and R370; these read DLG, FPDTD, and TTGE.

The protein in the N-terminal section; belongs to the IspD/TarI cytidylyltransferase family. IspD subfamily. It in the C-terminal section; belongs to the IspF family. A divalent metal cation is required as a cofactor.

The enzyme catalyses 2-C-methyl-D-erythritol 4-phosphate + CTP + H(+) = 4-CDP-2-C-methyl-D-erythritol + diphosphate. It carries out the reaction 4-CDP-2-C-methyl-D-erythritol 2-phosphate = 2-C-methyl-D-erythritol 2,4-cyclic diphosphate + CMP. Its pathway is isoprenoid biosynthesis; isopentenyl diphosphate biosynthesis via DXP pathway; isopentenyl diphosphate from 1-deoxy-D-xylulose 5-phosphate: step 2/6. It participates in isoprenoid biosynthesis; isopentenyl diphosphate biosynthesis via DXP pathway; isopentenyl diphosphate from 1-deoxy-D-xylulose 5-phosphate: step 4/6. Its function is as follows. Bifunctional enzyme that catalyzes the formation of 4-diphosphocytidyl-2-C-methyl-D-erythritol from CTP and 2-C-methyl-D-erythritol 4-phosphate (MEP) (IspD), and catalyzes the conversion of 4-diphosphocytidyl-2-C-methyl-D-erythritol 2-phosphate (CDP-ME2P) to 2-C-methyl-D-erythritol 2,4-cyclodiphosphate (ME-CPP) with a corresponding release of cytidine 5-monophosphate (CMP) (IspF). This chain is Bifunctional enzyme IspD/IspF, found in Anaeromyxobacter sp. (strain Fw109-5).